We begin with the raw amino-acid sequence, 405 residues long: Cysteine desulfurase IscS (405 aa).

Pyridoxal 5'-phosphate is bound at residue Asn-156. Lys-207 carries the post-translational modification N6-(pyridoxal phosphate)lysine. The active-site Cysteine persulfide intermediate is Cys-329. [2Fe-2S] cluster is bound at residue Cys-329.

This sequence belongs to the class-V pyridoxal-phosphate-dependent aminotransferase family. NifS/IscS subfamily. In terms of assembly, homodimer. Forms a heterotetramer with IscU, interacts with other sulfur acceptors. It depends on pyridoxal 5'-phosphate as a cofactor.

Its subcellular location is the cytoplasm. It catalyses the reaction (sulfur carrier)-H + L-cysteine = (sulfur carrier)-SH + L-alanine. It participates in cofactor biosynthesis; iron-sulfur cluster biosynthesis. Its function is as follows. Master enzyme that delivers sulfur to a number of partners involved in Fe-S cluster assembly, tRNA modification or cofactor biosynthesis. Catalyzes the removal of elemental sulfur atoms from cysteine to produce alanine. Functions as a sulfur delivery protein for Fe-S cluster synthesis onto IscU, an Fe-S scaffold assembly protein, as well as other S acceptor proteins. In Dechloromonas aromatica (strain RCB), this protein is Cysteine desulfurase IscS.